Here is a 691-residue protein sequence, read N- to C-terminus: F-box/LRR-repeat protein 5 (691 aa).

The interval 1 to 159 is hemerythrin-like; the sequence is MAPFPEEVDV…IKKKVIAQHC (159 aa). Residues His-15, His-57, Glu-58, Glu-61, His-80, His-126, and Glu-130 each contribute to the Fe(3+) site. One can recognise an F-box domain in the interval 202 to 248; the sequence is STGITHLPPEVMVSIFSYLNPQELCRCSQVSTKWSQLAKTGSLWKHL. LRR repeat units lie at residues 340-364, 365-392, 393-418, 479-508, 576-607, 608-635, and 636-661; these read SSAV…LDLT, QTDI…DLSG, CEKI…ESGL, VWML…CVME, TRLL…SLSG, CYQI…NLSG, and CLTV…YFYY. [2Fe-2S] cluster is bound by residues Cys-662, Cys-676, Cys-686, and Cys-687.

In terms of assembly, part of a SCF (SKP1-cullin-F-box) protein ligase complex. Interacts with ACO1/IRP1, IREB2/IRP2; the interaction depends on the [2Fe-2S] cluster. Interacts with DCTN1/p150-glued. The cofactor is [2Fe-2S] cluster. Polybiquitinated upon iron and oxygen depletion, leading to its degradation by the proteasome. Ubiquitination is regulated by the hemerythrin-like region that acts as an oxygen and iron sensor. Undergoes constitutive ubiquitin-dependent degradation at the steady state by HERC2.

Its subcellular location is the cytoplasm. The protein resides in the perinuclear region. The protein localises to the nucleus. Its pathway is protein modification; protein ubiquitination. An iron-sulfur cluster promotes IRP2 polyubiquitination and degradation in response to both iron and oxygen concentrations. Functionally, component of some SCF (SKP1-cullin-F-box) protein ligase complex that plays a central role in iron homeostasis by promoting the ubiquitination and subsequent degradation of IREB2/IRP2. The C-terminal domain of FBXL5 contains a redox-sensitive [2Fe-2S] cluster that, upon oxidation, promotes binding to IRP2 to effect its oxygen-dependent degradation. Under iron deficiency conditions, the N-terminal hemerythrin-like (Hr) region, which contains a diiron metal center, cannot bind iron and undergoes conformational changes that destabilize the FBXL5 protein and cause its ubiquitination and degradation. When intracellular iron levels start rising, the Hr region is stabilized. Additional increases in iron levels facilitate the assembly and incorporation of a redox active [2Fe-2S] cluster in the C-terminal domain. Only when oxygen level is high enough to maintain the cluster in its oxidized state can FBXL5 recruit IRP2 as a substrate for polyubiquination and degradation. Promotes ubiquitination and subsequent degradation of the dynactin complex component DCTN1. Within the nucleus, promotes the ubiquitination of SNAI1; preventing its interaction with DNA and promoting its degradation. Negatively regulates DNA damage response by mediating the ubiquitin-proteasome degradation of the DNA repair protein NABP2. The polypeptide is F-box/LRR-repeat protein 5 (FBXL5) (Bos taurus (Bovine)).